Here is a 3392-residue protein sequence, read N- to C-terminus: MNNQRKKTGRPSFNMLKRARNRVSTGSQLAKRFSKGLLSGQGPMKLVMAFIAFLRFLAIPPTAGILARWSSFKKNGAIKVLRGFKKEISSMLNIMNRRKRSVTMLLMLLPTALAFHLTTRGGEPHMIVSKQERGKSLLFKTSAGVNMCTLIAMDLGELCEDTMTYKCPRITEAEPDDVDCWCNATDTWVTYGTCSQTGEHRRDKRSVALAPHVGLGLETRTETWMSSEGAWKQIQKVETWALRHPGFTVIALFLAHAIGTSITQKGIIFILLMLVTPSMAMRCVGIGNRDFVEGLSGATWVDVVLEHGSCVTTMAKNKPTLDIELLKTEVTNPAVLRKLCIEAKISNTTTDSRCPTQGEATLVEEQDANFVCRRTFVDRGWGNGCGLFGKGSLLTCAKFKCVTKLEGKIVQYENLKYSVIVTVHTGDQHQVGNETTEHGTIATITPQAPTSEIQLTDYGALTLDCSPRTGLDFNEMVLLTMKEKSWLVHKQWFLDLPLPWTSGASTSQETWNRQDLLVTFKTAHAKKQEVVVLGSQEGAMHTALTGATEIQTSGTTTIFAGHLKCRLKMDKLTLKGTSYVMCTGSFKLEKEVAETQHGTVLVQVKYEGTDAPCKIPFSTQDEKGVTQNGRLITANPIVTDKEKPVNIETEPPFGESYIVVGAGEKALKLSWFKKGSSIGKMFEATARGARRMAILGDTAWDFGSIGGVFTSVGKLVHQVFGTAYGVLFSGVSWTMKIGIGILLTWLGLNSRSTSLSMTCIAVGMVTLYLGVMVQADSGCVINWKGRELKCGSGIFVTNEVHTWTEQYKFQADSPKRLSAAIGRAWEEGVCGIRSATRLENIMWKQISNELNHILLENDIKFTVVVGNANGILAQGKKMIRPQPMEHKYSWKSWGKAKIIGADIQNTTFIIDGPDTPECPDEQRAWNIWEVEDYGFGIFTTNIWLKLRDSYTQMCDHRLMSAAIKDSKAVHADMGYWIESEKNETWKLARASFIEVKTCIWPKSHTLWSNGVLESEMIIPKMYGGPISQHNYRPGYFTQTAGPWHLGKLELDFDLCEGTTVVVDEHCGSRGPSLRTTTVTGKIIHEWCCRSCTLPPLRFRGEDGCWYGMEIRPVKEKEENLVRSMVSAGSGEVDSFSLGILCVSIMIEEVMRSRWSRKMLMTGTLAVFLLLIMGQLTWNDLIRLCIMVGANASDKMGMGTTYLALMATFKMRPMFAVGLLFRRLTSREVLLLTIGLSLVASVELPNSLEELGDGLAMGIMMLKLLTEFQPHQLWTTLLSLTFIKTTLSLDYAWKTTAMVLSIVSLFPLCLSTTSQKTTWLPVLLGSFGCKPLTMFLITENEIWGRKSWPLNEGIMAIGIVSILLSSLLKNDVPLAGPLIAGGMLIACYVISGSSADLSLEKAAEVSWEEEAEHSGTSHNILVEVQDDGTMKIKDEERDDTLTILLKATLLAVSGVYPMSIPATLFVWYFWQKKKQRSGVLWDTPSPPEVERAVLDDGIYRILQRGLLGRSQVGVGVFQDGVFHTMWHVTRGAVLMYQGKRLEPSWASVKKDLISYGGGWRFQGSWNTGEEVQVIAVEPGKNPKNVQTTPGTFKTPEGEVGAIALDFKPGTSGSPIVNREGKIVGLYGNGVVTTSGTYVSAIAQAKASQEGPLPEIEDEVFKKRNLTIMDLHPGSGKTRRYLPAIVREAIKRKLRTLILAPTRVVASEMAEALKGMPIRYQTTAVKSEHTGREIVDLMCHATFTMRLLSPVRVPNYNMIIMDEAHFTDPASIAARGYISTRVGMGEAAAIFMTATPPGSVEAFPQSNAVIQDEERDIPERSWNSGYDWITDFPGKTVWFVPSIKSGNDIANCLRKNGKRVIQLSRKTFDTEYQKTKNNDWDYVVTTDISEMGANFRADRVIDPRRCLKPVILKDGPERVILAGPMPVTVASAAQRRGRIGRNQNKEGDQYVYMGQPLNNDEDHAHWTEAKMLLDNINTPEGIIPALFEPEREKSAAIDGEYRLRGEARKTFVELMRRGDLPVWLSYKVASEGFQYSDRRWCFDGERNNQVLEENMDVEIWTKEGERKKLRPRWLDARTYSDPLALREFKEFAAGRRSVSGDLILEIGKLPQHLTLRAQNALDNLVMLHNSEQGGKAYRHAMEELPDTIETLMLLALIAVLTGGVTLFFLSGKGLGKTSIGLLCVTASSALLWMASVEPHWIAASIILEFFLMVLLIPEPDRQRTPQDNQLAYVVIGLLFMILTVAANEMGLLETTKKDLGIGHVAAENHQHATILDVDLHPASAWTLYAVATTVITPMMRHTIENTTANISLTAIANQAAILMGLDKGWPISKMDLGVPLLALGCYSQVNPLTLTAAVLMLVAHYAIIGPGLQAKATREAQKRTAAGIMKNPTVDGIVAIDLDPVVYDAKFEKQLGQIMLLILCTSQILLMRTTWALCESITLATGPLTTLWEGSPGKFWNTTIAVSMANIFRGSYLAGAGLAFSLMKSLGGGRRGTGAQGETLGEKWKRQLNQLSKSEFNTYKRSGIMEVDRSEAKEGLKRGETTKHAVSRGTAKLRWFVERNLVKPEGKVIDLGCGRGGWSYYCAGLKKVTEVKGYTKGGPGHEEPIPMATYGWNLVKLHSGKDVFFMPPEKCDTLLCDIGESSPNPTIEEGRTLRVLKMVEPWLRGNQFCIKILNPYMPSVVETLEQMQRKHGGMLVRNPLSRNSTHEMYWVSCGTGNIVSAVNMTSRMLLNRFTMAHRKPTYERDVDLGAGTRHVAVEPEVANLDIIGQRIENIKNEHKSTWHYDEDNPYKTWAYHGSYEVKPSGSASSMVNGVVRLLTKPWDVIPMVTQIAMTDTTPFGQQRVFKEKVDTRTPRAKRGTAQIMEVTAKWLWGFLSRNKKPRICTREEFTRKVRSNAAIGAVFVDENQWNSAKEAVEDERFWDLVHRERELHKQGKCATCVYNMMGKREKKLGEFGKAKGSRAIWYMWLGARFLEFEALGFMNEDHWFSRENSLSGVEGEGLHKLGYILRDISKIPGGNMYADDTAGWDTRITEDDLQNEAKITDIMEPEHALLATSIFKLTYQNKVVRVQRPAKNGTVMDVISRRDQRGSGQVGTYGLNTFTNMEVQLIRQMESEGIFFPSELESPNLAERVLDWLEKHGAERLKRMAISGDDCVVKPIDDRFATALIALNDMGKVRKDIPQWEPSKGWNDWQQVPFCSHHFHQLIMKDGREIVVPCRNQDELVGRARVSQGAGWSLRETACLGKSYAQMWQLMYFHRRDLRLAANAICSAVPVDWVPTSRTTWSIHAHHQWMTTEDMLSVWNRVWIEENPWMEDKTHVSSWEEVPYLGKREDQWCGSLIGLTARATWATNIQVAINQVRRLIGNENYLDYMTSMKRFKNESDPEGALW.

Topologically, residues 1 to 101 (MNNQRKKTGR…LNIMNRRKRS (101 aa)) are cytoplasmic. The hydrophobic; homodimerization of capsid protein C stretch occupies residues 33–74 (FSKGLLSGQGPMKLVMAFIAFLRFLAIPPTAGILARWSSFKK). Residues 101-114 (SVTMLLMLLPTALA) constitute a propeptide, ER anchor for the protein C, removed in mature form by serine protease NS3. Residues 102–119 (VTMLLMLLPTALAFHLTT) traverse the membrane as a helical segment. Residues 120 to 242 (RGGEPHMIVS…QIQKVETWAL (123 aa)) lie on the Extracellular side of the membrane. The N-linked (GlcNAc...) asparagine; by host glycan is linked to Asn183. Residues 243-260 (RHPGFTVIALFLAHAIGT) traverse the membrane as a helical segment. Position 261 (Ser261) is a topological domain, cytoplasmic. A helical membrane pass occupies residues 262–280 (ITQKGIIFILLMLVTPSMA). Residues 281 to 725 (MRCVGIGNRD…VHQVFGTAYG (445 aa)) are Extracellular-facing. 4 disulfides stabilise this stretch: Cys283–Cys310, Cys340–Cys401, Cys354–Cys385, and Cys372–Cys396. The N-linked (GlcNAc...) asparagine; by host glycan is linked to Asn347. The N-linked (GlcNAc...) asparagine; by host glycan is linked to Asn433. 2 disulfides stabilise this stretch: Cys465-Cys565 and Cys582-Cys613. An intramembrane region (helical) is located at residues 726-746 (VLFSGVSWTMKIGIGILLTWL). The Extracellular portion of the chain corresponds to 747 to 752 (GLNSRS). An intramembrane region (helical) is located at residues 753-775 (TSLSMTCIAVGMVTLYLGVMVQA). The Extracellular segment spans residues 776–1125 (DSGCVINWKG…KEENLVRSMV (350 aa)). Intrachain disulfides connect Cys779/Cys790, Cys830/Cys918, Cys954/Cys998, Cys1055/Cys1104, Cys1066/Cys1088, and Cys1087/Cys1091. 2 N-linked (GlcNAc...) asparagine; by host glycosylation sites follow: Asn905 and Asn982. Residues 1126–1146 (SAGSGEVDSFSLGILCVSIMI) traverse the membrane as a helical segment. The Cytoplasmic portion of the chain corresponds to 1147 to 1157 (EEVMRSRWSRK). The chain crosses the membrane as a helical span at residues 1158-1178 (MLMTGTLAVFLLLIMGQLTWN). Over 1179–1199 (DLIRLCIMVGANASDKMGMGT) the chain is Lumenal. An N-linked (GlcNAc...) asparagine; by host glycan is attached at Asn1190. The helical transmembrane segment at 1200–1220 (TYLALMATFKMRPMFAVGLLF) threads the bilayer. Topologically, residues 1221-1289 (RRLTSREVLL…TFIKTTLSLD (69 aa)) are cytoplasmic. A helical membrane pass occupies residues 1290–1310 (YAWKTTAMVLSIVSLFPLCLS). At 1311-1315 (TTSQK) the chain is on the lumenal side. A helical membrane pass occupies residues 1316 to 1336 (TTWLPVLLGSFGCKPLTMFLI). The Cytoplasmic portion of the chain corresponds to 1337–1346 (TENEIWGRKS). Residues 1347 to 1367 (WPLNEGIMAIGIVSILLSSLL) traverse the membrane as a helical segment. Residues 1368–1370 (KND) are Lumenal-facing. Residues 1371–1391 (VPLAGPLIAGGMLIACYVISG) traverse the membrane as a helical segment. Residues 1392-1447 (SSADLSLEKAAEVSWEEEAEHSGTSHNILVEVQDDGTMKIKDEERDDTLTILLKAT) are Cytoplasmic-facing. Positions 1398–1437 (LEKAAEVSWEEEAEHSGTSHNILVEVQDDGTMKIKDEERD) are interacts with and activates NS3 protease. The segment at residues 1448–1468 (LLAVSGVYPMSIPATLFVWYF) is an intramembrane region (helical). The Cytoplasmic segment spans residues 1469-2148 (WQKKKQRSGV…MEELPDTIET (680 aa)). The 178-residue stretch at 1476 to 1653 (SGVLWDTPSP…KASQEGPLPE (178 aa)) folds into the Peptidase S7 domain. Active-site charge relay system; for serine protease NS3 activity residues include His1526, Asp1550, and Ser1610. Residues 1656–1812 (DEVFKKRNLT…QSNAVIQDEE (157 aa)) form the Helicase ATP-binding domain. 1669–1676 (LHPGSGKT) lines the ATP pocket. The DEAH box motif lies at 1760-1763 (DEAH). Residues 1822 to 1989 (SGYDWITDFP…IIPALFEPER (168 aa)) enclose the Helicase C-terminal domain. Position 1864 is an N6-acetyllysine; by host (Lys1864). The helical transmembrane segment at 2149–2169 (LMLLALIAVLTGGVTLFFLSG) threads the bilayer. Over 2170–2171 (KG) the chain is Lumenal. The helical intramembrane region spans 2172–2192 (LGKTSIGLLCVTASSALLWMA). Ser2193 is a topological domain (lumenal). A helical transmembrane segment spans residues 2194-2214 (VEPHWIAASIILEFFLMVLLI). Over 2215–2229 (PEPDRQRTPQDNQLA) the chain is Cytoplasmic. A helical membrane pass occupies residues 2230-2250 (YVVIGLLFMILTVAANEMGLL). Residues 2251-2276 (ETTKKDLGIGHVAAENHQHATILDVD) are Lumenal-facing. The segment at residues 2277-2297 (LHPASAWTLYAVATTVITPMM) is an intramembrane region (helical). The Lumenal segment spans residues 2298–2349 (RHTIENTTANISLTAIANQAAILMGLDKGWPISKMDLGVPLLALGCYSQVNP). N-linked (GlcNAc...) asparagine; by host glycosylation is found at Asn2303 and Asn2307. A helical membrane pass occupies residues 2350–2370 (LTLTAAVLMLVAHYAIIGPGL). At 2371–2415 (QAKATREAQKRTAAGIMKNPTVDGIVAIDLDPVVYDAKFEKQLGQ) the chain is on the cytoplasmic side. The chain crosses the membrane as a helical span at residues 2416–2436 (IMLLILCTSQILLMRTTWALC). Residues 2437-2461 (ESITLATGPLTTLWEGSPGKFWNTT) lie on the Lumenal side of the membrane. A glycan (N-linked (GlcNAc...) asparagine; by host) is linked at Asn2459. The chain crosses the membrane as a helical span at residues 2462–2482 (IAVSMANIFRGSYLAGAGLAF). The Cytoplasmic segment spans residues 2483–3392 (SLMKSLGGGR…NESDPEGALW (910 aa)). Positions 2495-2756 (TGAQGETLGE…DVDLGAGTRH (262 aa)) constitute an mRNA cap 0-1 NS5-type MT domain. S-adenosyl-L-methionine contacts are provided by Ser2549, Gly2579, Trp2580, Thr2597, Lys2598, Asp2624, Val2625, Ile2640, and Tyr2711. Positions 3021-3170 (NMYADDTAGW…PIDDRFATAL (150 aa)) constitute a RdRp catalytic domain.

It in the N-terminal section; belongs to the class I-like SAM-binding methyltransferase superfamily. mRNA cap 0-1 NS5-type methyltransferase family. In terms of assembly, capsid protein C: Homodimer. Interacts (via N-terminus) with host EXOC1 (via C-terminus); this interaction results in EXOC1 degradation through the proteasome degradation pathway. Forms heterodimers with envelope protein E in the endoplasmic reticulum and Golgi. As to quaternary structure, homodimer; in the endoplasmic reticulum and Golgi. Interacts with protein prM. Interacts with non-structural protein 1. In terms of assembly, homodimer; Homohexamer when secreted. Interacts with envelope protein E. Interacts (via N-terminus) with serine protease NS3. As to quaternary structure, forms a heterodimer with serine protease NS3. May form homooligomers. In terms of assembly, forms a heterodimer with NS2B. Interacts with NS4B. Interacts with unphosphorylated RNA-directed RNA polymerase NS5; this interaction stimulates RNA-directed RNA polymerase NS5 guanylyltransferase activity. Interacts with host SHFL. Interacts with host MAVS; this interaction inhibits the synthesis of IFN-beta. Interacts with host SHFL. Interacts with host AUP1; the interaction occurs in the presence of Dengue virus NS4B and induces lipophagy which facilitates production of virus progeny particles. As to quaternary structure, interacts with serine protease NS3. In terms of assembly, homodimer. Interacts with host STAT2; this interaction inhibits the phosphorylation of the latter, and, when all viral proteins are present (polyprotein), targets STAT2 for degradation. Interacts with serine protease NS3. Post-translationally, specific enzymatic cleavages in vivo yield mature proteins. Cleavages in the lumen of endoplasmic reticulum are performed by host signal peptidase, wereas cleavages in the cytoplasmic side are performed by the Serine protease NS3. Signal cleavage at the 2K-4B site requires a prior NS3 protease-mediated cleavage at the 4A-2K site. A C-terminally truncated form of non-structural protein 2A, results from partial cleavage by NS3. In terms of processing, cleaved in post-Golgi vesicles by a host furin, releasing the mature small envelope protein M, and peptide pr. This cleavage is incomplete as up to 30% of viral particles still carry uncleaved prM. Post-translationally, the excreted form is glycosylated and this is required for efficient secretion of the protein from infected cells. Phosphorylated on serines residues. This phosphorylation may trigger NS5 nuclear localization. In terms of processing, N-glycosylated. Post-translationally, acetylated by host KAT5. Acetylation modulates NS3 RNA-binding and unwinding activities and plays an important positive role for viral replication.

Its subcellular location is the virion. The protein localises to the host nucleus. The protein resides in the secreted. It is found in the virion membrane. It localises to the host endoplasmic reticulum membrane. Its subcellular location is the host mitochondrion. It catalyses the reaction Selective hydrolysis of -Xaa-Xaa-|-Yaa- bonds in which each of the Xaa can be either Arg or Lys and Yaa can be either Ser or Ala.. The enzyme catalyses RNA(n) + a ribonucleoside 5'-triphosphate = RNA(n+1) + diphosphate. The catalysed reaction is a ribonucleoside 5'-triphosphate + H2O = a ribonucleoside 5'-diphosphate + phosphate + H(+). It carries out the reaction ATP + H2O = ADP + phosphate + H(+). It catalyses the reaction a 5'-end (5'-triphosphoguanosine)-ribonucleoside in mRNA + S-adenosyl-L-methionine = a 5'-end (N(7)-methyl 5'-triphosphoguanosine)-ribonucleoside in mRNA + S-adenosyl-L-homocysteine. The enzyme catalyses a 5'-end (N(7)-methyl 5'-triphosphoguanosine)-ribonucleoside in mRNA + S-adenosyl-L-methionine = a 5'-end (N(7)-methyl 5'-triphosphoguanosine)-(2'-O-methyl-ribonucleoside) in mRNA + S-adenosyl-L-homocysteine + H(+). Its function is as follows. Plays a role in virus budding by binding to membrane and gathering the viral RNA into a nucleocapsid that forms the core of a mature virus particle. During virus entry, may induce genome penetration in host cytoplasm after hemifusion induced by surface proteins. Can migrate tot cell nucleus where it modulates host functions. Prevents premature fusion activity of envelope proteins in trans Golgi by binding to envelope protein E at pH6.0. After virion release in extracellular space gets dissociated from E dimers. In terms of biological role, acts as a chaperone for envelope protein E during intracellular virion assembly by masking and inactivating envelope protein E fusion peptide. prM is the only viral peptide matured by host furin in the trans-Golgi network. Presumably to avoid catastrophic activation of the viral fusion activity in acidic GolGi compartment prior to virion release. prM-E cleavage is ineficient, and many virions are only partially matured. These uncleaved prM would play a role in immune evasion. Functionally, may play a role in virus budding. Exerts cytotoxic effects by activating a mitochondrial apoptotic pathway through M extodomain. May display a viroporin activity. Its function is as follows. Binds to host cell surface receptor and mediates fusion between viral and cellular membranes. Envelope protein is synthesized in the endoplasmic reticulum in the form of heterodimer with protein prM. They play a role in virion budding in the ER, and the newly formed immature particle is covered with 60 spikes composed of heterodimer between precursor prM and envelope protein E. The virion is transported to the Golgi apparatus where the low pH causes dissociation of PrM-E heterodimers and formation of E homodimers. prM-E cleavage is ineficient, and many virions are only partially matured. These uncleaved prM would play a role in immune evasion. Involved in immune evasion, pathogenesis and viral replication. Once cleaved off the polyprotein, is targeted to three destinations: the viral replication cycle, the plasma membrane and the extracellular compartment. May play a role in viral genome replication. Assist membrane bending and envelopment of genomic RNA at the endoplasmic reticulum. Excreted as a hexameric lipoparticle that plays a role against host immune response. In terms of biological role, component of the viral RNA replication complex that functions in virion assembly and antagonizes the host immune response. Functionally, required cofactor for the serine protease function of NS3. May have membrane-destabilizing activity and form viroporins. Its function is as follows. Displays three enzymatic activities: serine protease, NTPase and RNA helicase. NS3 serine protease, in association with NS2B, performs its autocleavage and cleaves the polyprotein at dibasic sites in the cytoplasm: C-prM, NS2A-NS2B, NS2B-NS3, NS3-NS4A, NS4A-2K and NS4B-NS5. NS3 RNA helicase binds RNA and unwinds dsRNA in the 3' to 5' direction. Regulates the ATPase activity of the NS3 helicase activity. NS4A allows NS3 helicase to conserve energy during unwinding. Plays a role in the inhibition of the host innate immune response. Interacts with host MAVS and thereby prevents the interaction between RIGI and MAVS. In turn, IFN-beta production is impaired. Interacts with host AUP1 which mediates induction of lipophagy in host cells and facilitates production of virus progeny particles. In terms of biological role, functions as a signal peptide for NS4B and is required for the interferon antagonism activity of the latter. Functionally, inhibits interferon (IFN)-induced host STAT1 phosphorylation and nuclear translocation, thereby preventing the establishment of cellular antiviral state by blocking the IFN-alpha/beta pathway. Its function is as follows. Replicates the viral (+) and (-) genome, and performs the capping of genomes in the cytoplasm. NS5 methylates viral RNA cap at guanine N-7 and ribose 2'-O positions. Besides its role in RNA genome replication, also prevents the establishment of cellular antiviral state by blocking the interferon-alpha/beta (IFN-alpha/beta) signaling pathway. Inhibits host TYK2 and STAT2 phosphorylation, thereby preventing activation of JAK-STAT signaling pathway. This is Genome polyprotein from Dengue virus type 1 (strain Brazil/97-11/1997) (DENV-1).